The primary structure comprises 250 residues: Keratin-associated protein 9-1 (250 aa).

Repeat copies occupy residues C8–T12, C13–T17, C18–T22, C37–S41, C42–S46, C51–T55, C56–T60, C61–T65, C66–T70, C75–S79, C80–P84, C85–T89, C90–S94, C95–T99, C105–I109, C114–P117, C118–P121, C133–T137, C138–T142, C143–T147, C153–S157, C162–T166, C167–I171, C176–S180, C185–P189, C190–T194, C214–T218, C219–T223, C229–S233, C234–P238, C239–S243, and C244–S248. The segment at C8 to S248 is 32 X 5 AA repeats of C-C-[CGSVRQH]-[SQTNP]-[PTSI].

Belongs to the KRTAP type 9 family. As to quaternary structure, interacts with hair keratins.

Functionally, in the hair cortex, hair keratin intermediate filaments are embedded in an interfilamentous matrix, consisting of hair keratin-associated proteins (KRTAP), which are essential for the formation of a rigid and resistant hair shaft through their extensive disulfide bond cross-linking with abundant cysteine residues of hair keratins. The matrix proteins include the high-sulfur and high-glycine-tyrosine keratins. In Homo sapiens (Human), this protein is Keratin-associated protein 9-1.